A 107-amino-acid polypeptide reads, in one-letter code: Nucleoid-associated protein Xfasm12_1216 (107 aa).

This sequence belongs to the YbaB/EbfC family. As to quaternary structure, homodimer.

The protein resides in the cytoplasm. It localises to the nucleoid. Its function is as follows. Binds to DNA and alters its conformation. May be involved in regulation of gene expression, nucleoid organization and DNA protection. The polypeptide is Nucleoid-associated protein Xfasm12_1216 (Xylella fastidiosa (strain M12)).